The primary structure comprises 214 residues: Adenylate kinase (214 aa).

ATP is bound at residue glycine 10–threonine 15. The NMP stretch occupies residues serine 30–valine 59. Residues threonine 31, arginine 36, glutamine 57–valine 59, glycine 85–arginine 88, and glutamine 92 contribute to the AMP site. Positions glycine 122–aspartate 159 are LID. ATP-binding positions include arginine 123 and valine 132–tyrosine 133. 2 residues coordinate AMP: arginine 156 and arginine 167. Glutamine 200 is a binding site for ATP.

The protein belongs to the adenylate kinase family. In terms of assembly, monomer.

The protein resides in the cytoplasm. It catalyses the reaction AMP + ATP = 2 ADP. It functions in the pathway purine metabolism; AMP biosynthesis via salvage pathway; AMP from ADP: step 1/1. Functionally, catalyzes the reversible transfer of the terminal phosphate group between ATP and AMP. Plays an important role in cellular energy homeostasis and in adenine nucleotide metabolism. This chain is Adenylate kinase, found in Shewanella frigidimarina (strain NCIMB 400).